The sequence spans 1068 residues: Probable ATPase FE772_23070 (1068 aa).

217 to 224 (GGGGAGKT) contacts ATP.

Functionally, involved in defense against bacteriophages. When this probable 4 gene operon (bGSDM-FE772_23060-FE772_23065-FE772_23070) is inserted into E.coli it provides nearly 100-fold protection against phages T5 and T6 and about 8-fold against phage T4. The operon without bGSDM no longer protects against phage. Probably a nucleotide hydrolase, possibly of ATP. The polypeptide is Probable ATPase FE772_23070 (Lysobacter enzymogenes).